Reading from the N-terminus, the 628-residue chain is DNA ligase (628 aa).

NAD(+) is bound by residues 36–40, 85–86, and glutamate 117; these read DVEYD and SL. Lysine 119 serves as the catalytic N6-AMP-lysine intermediate. Arginine 140, glutamate 174, lysine 309, and lysine 333 together coordinate NAD(+). Residues cysteine 427, cysteine 430, cysteine 446, and cysteine 452 each coordinate Zn(2+).

Belongs to the NAD-dependent DNA ligase family. LigA subfamily. Requires Mg(2+) as cofactor. It depends on Mn(2+) as a cofactor.

It catalyses the reaction NAD(+) + (deoxyribonucleotide)n-3'-hydroxyl + 5'-phospho-(deoxyribonucleotide)m = (deoxyribonucleotide)n+m + AMP + beta-nicotinamide D-nucleotide.. Functionally, DNA ligase that catalyzes the formation of phosphodiester linkages between 5'-phosphoryl and 3'-hydroxyl groups in double-stranded DNA using NAD as a coenzyme and as the energy source for the reaction. It is essential for DNA replication and repair of damaged DNA. The chain is DNA ligase from Tropheryma whipplei (strain TW08/27) (Whipple's bacillus).